Consider the following 274-residue polypeptide: NH(3)-dependent NAD(+) synthetase (274 aa).

An ATP-binding site is contributed by 46 to 53 (GISGGQDS). Position 52 (Asp-52) interacts with Mg(2+). Arg-140 contacts deamido-NAD(+). Thr-160 is an ATP binding site. Glu-165 contacts Mg(2+). Residues Lys-173 and Asp-180 each coordinate deamido-NAD(+). Residues Lys-189 and Thr-211 each coordinate ATP. Deamido-NAD(+) is bound at residue 260–261 (HK).

This sequence belongs to the NAD synthetase family. Homodimer.

The catalysed reaction is deamido-NAD(+) + NH4(+) + ATP = AMP + diphosphate + NAD(+) + H(+). It functions in the pathway cofactor biosynthesis; NAD(+) biosynthesis; NAD(+) from deamido-NAD(+) (ammonia route): step 1/1. Functionally, catalyzes the ATP-dependent amidation of deamido-NAD to form NAD. Uses ammonia as a nitrogen source. This Streptococcus gordonii (strain Challis / ATCC 35105 / BCRC 15272 / CH1 / DL1 / V288) protein is NH(3)-dependent NAD(+) synthetase.